A 668-amino-acid chain; its full sequence is Beta-galactosidase (668 aa).

Positions 1-24 are cleaved as a signal peptide; it reads MARPAAVRVLWALLLPLLLGSARG. Residues 25 to 29 constitute a propeptide that is removed on maturation; it reads LRNAS. Residues Y84, E130, and N188 each coordinate substrate. E189 serves as the catalytic Proton donor. The cysteines at positions 196 and 231 are disulfide-linked. N248 carries N-linked (GlcNAc...) asparagine glycosylation. E269 (nucleophile) is an active-site residue. Y334 provides a ligand contact to substrate. 4 N-linked (GlcNAc...) asparagine glycosylation sites follow: N465, N499, N546, and N556. C627 and C635 are joined by a disulfide.

It belongs to the glycosyl hydrolase 35 family. Homodimer. May form higher multimers.

The protein resides in the lysosome. The catalysed reaction is Hydrolysis of terminal non-reducing beta-D-galactose residues in beta-D-galactosides.. Its function is as follows. Cleaves beta-linked terminal galactosyl residues from gangliosides, glycoproteins, and glycosaminoglycans. The protein is Beta-galactosidase (GLB1) of Canis lupus familiaris (Dog).